A 498-amino-acid polypeptide reads, in one-letter code: Glutamate--tRNA ligase (498 aa).

Residues 11–21 (PSPTGHLHIGN) carry the 'HIGH' region motif. Residues 260-264 (KLSKR) carry the 'KMSKS' region motif. Residue K263 coordinates ATP.

It belongs to the class-I aminoacyl-tRNA synthetase family. Glutamate--tRNA ligase type 1 subfamily. As to quaternary structure, monomer.

The protein localises to the cytoplasm. It carries out the reaction tRNA(Glu) + L-glutamate + ATP = L-glutamyl-tRNA(Glu) + AMP + diphosphate. In terms of biological role, catalyzes the attachment of glutamate to tRNA(Glu) in a two-step reaction: glutamate is first activated by ATP to form Glu-AMP and then transferred to the acceptor end of tRNA(Glu). In Leuconostoc mesenteroides subsp. mesenteroides (strain ATCC 8293 / DSM 20343 / BCRC 11652 / CCM 1803 / JCM 6124 / NCDO 523 / NBRC 100496 / NCIMB 8023 / NCTC 12954 / NRRL B-1118 / 37Y), this protein is Glutamate--tRNA ligase.